A 133-amino-acid polypeptide reads, in one-letter code: UPF0225 protein BP2036 (133 aa).

Belongs to the UPF0225 family.

The sequence is that of UPF0225 protein BP2036 from Bordetella pertussis (strain Tohama I / ATCC BAA-589 / NCTC 13251).